Reading from the N-terminus, the 432-residue chain is MSLSPKQEQLFKQASKHIPGGVNSPVRAFNGVGGTPVFIEKAKGAYLWDVDGKRYVDYVGSWGPMILGHAHPDIIKAVQTAAEDGLSFGAPTVHETTLADIICEIMPSIELVRMTNSGTEATMTAIRLARGYTGRDKIVKFEGCYHGHSDSLLVKAGSGLLTKGEGEPTSKGVPADFAKHTLTLPYNDIAALKECFAKFGHEIAGVIIEPVAGNMNMVKPIDGFLQAIRDVCDEYKSVFIIDEVMTGFRVALGGAQSVYNVKPDLTTLGKIIGAGLPVGAFGGKREIMECIAPLGGVYQAGTLSGNPLAMRAGIEMFKHLRQPDFYSKLSAQLEKLLAGLQAAADEAGIPFKTQQAGAMFGLYFTDQEDITSFDSMLACDIEAFKKFFHGMLKRGVNLAPSAFEAGFISSAHSDEDIEFTIQAAKETFAEMK.

Lysine 270 carries the N6-(pyridoxal phosphate)lysine modification.

Belongs to the class-III pyridoxal-phosphate-dependent aminotransferase family. HemL subfamily. In terms of assembly, homodimer. Pyridoxal 5'-phosphate is required as a cofactor.

The protein localises to the cytoplasm. The enzyme catalyses (S)-4-amino-5-oxopentanoate = 5-aminolevulinate. It participates in porphyrin-containing compound metabolism; protoporphyrin-IX biosynthesis; 5-aminolevulinate from L-glutamyl-tRNA(Glu): step 2/2. In Acinetobacter baumannii (strain ATCC 17978 / DSM 105126 / CIP 53.77 / LMG 1025 / NCDC KC755 / 5377), this protein is Glutamate-1-semialdehyde 2,1-aminomutase.